Consider the following 231-residue polypeptide: Fibrillarin-like rRNA/tRNA 2'-O-methyltransferase (231 aa).

S-adenosyl-L-methionine-binding positions include 88 to 89, 106 to 107, 131 to 132, and 151 to 154; these read TT, EF, DA, and DVAQ.

Belongs to the methyltransferase superfamily. Fibrillarin family. Interacts with nop5. Component of box C/D small ribonucleoprotein (sRNP) particles that contain rpl7ae, FlpA and nop5, plus a guide RNA.

Its function is as follows. Involved in pre-rRNA and tRNA processing. Utilizes the methyl donor S-adenosyl-L-methionine to catalyze the site-specific 2'-hydroxyl methylation of ribose moieties in rRNA and tRNA. Site specificity is provided by a guide RNA that base pairs with the substrate. Methylation occurs at a characteristic distance from the sequence involved in base pairing with the guide RNA. The polypeptide is Fibrillarin-like rRNA/tRNA 2'-O-methyltransferase (Methanococcus aeolicus (strain ATCC BAA-1280 / DSM 17508 / OCM 812 / Nankai-3)).